We begin with the raw amino-acid sequence, 190 residues long: Elongation factor P (190 aa).

It belongs to the elongation factor P family.

It localises to the cytoplasm. It participates in protein biosynthesis; polypeptide chain elongation. In terms of biological role, involved in peptide bond synthesis. Stimulates efficient translation and peptide-bond synthesis on native or reconstituted 70S ribosomes in vitro. Probably functions indirectly by altering the affinity of the ribosome for aminoacyl-tRNA, thus increasing their reactivity as acceptors for peptidyl transferase. This chain is Elongation factor P, found in Pseudomonas fluorescens (strain ATCC BAA-477 / NRRL B-23932 / Pf-5).